The sequence spans 262 residues: Global transcriptional regulator CodY (262 aa).

Residues 1–159 form a GAF domain region; the sequence is MAHLLEKTRK…ASTVVGIQLL (159 aa). Residues 207 to 226 constitute a DNA-binding region (H-T-H motif); sequence ASVIADRIGITRSVIVNALR.

Belongs to the CodY family.

It localises to the cytoplasm. DNA-binding global transcriptional regulator which is involved in the adaptive response to starvation and acts by directly or indirectly controlling the expression of numerous genes in response to nutrient availability. During rapid exponential growth, CodY is highly active and represses genes whose products allow adaptation to nutrient depletion. This Streptococcus pneumoniae (strain ATCC BAA-255 / R6) protein is Global transcriptional regulator CodY.